A 355-amino-acid chain; its full sequence is Guanine nucleotide-binding protein G(i) subunit alpha-2 (355 aa).

Glycine 2 is lipidated: N-myristoyl glycine. Cysteine 3 carries the S-palmitoyl cysteine lipid modification. In terms of domain architecture, G-alpha spans 32–355 (REVKLLLLGA…KNNLKDCGLF (324 aa)). Residues 35-48 (KLLLLGAGESGKST) form a G1 motif region. GTP contacts are provided by residues 40–47 (GAGESGKS), 176–182 (LRTRVKT), 201–205 (DVGGQ), 270–273 (NKKD), and alanine 327. Serine 47 lines the Mg(2+) pocket. The segment at 174 to 182 (DVLRTRVKT) is G2 motif. An ADP-ribosylarginine; by cholera toxin modification is found at arginine 179. Residue threonine 182 coordinates Mg(2+). Residues 197-206 (FKMFDVGGQR) form a G3 motif region. Residue glutamine 205 is modified to Deamidated glutamine; by Photorhabdus PAU_02230. Residues 266–273 (ILFLNKKD) are G4 motif. Residues 325–330 (TCATDT) form a G5 motif region. Cysteine 352 is subject to ADP-ribosylcysteine; by pertussis toxin.

Belongs to the G-alpha family. G(i/o/t/z) subfamily. G proteins are composed of 3 units; alpha, beta and gamma. The alpha chain contains the guanine nucleotide binding site. In this context, interacts with GNB2. Interacts with GPSM1. Interacts with RGS12 and RGS14. Interacts with UNC5B. Interacts (inactive GDP-bound form) with NUCB1 (via GBA motif); the interaction leads to activation of GNAI3. Interacts (inactive GDP-bound form) with CCDC88C/DAPLE (via GBA motif). Interacts (inactive GDP-bound form) with CCDC8A/GIV (via GBA motif). Interacts with CXCR1 and CXCR2. In terms of processing, (Microbial infection) Deamidated at Gln-205 by Photorhabdus asymbiotica toxin PAU_02230, blocking GTP hydrolysis of heterotrimeric GNAQ or GNA11 and G-alphai (GNAI1, GNAI2 or GNAI3) proteins, thereby activating RhoA.

The protein localises to the cytoplasm. It localises to the cytoskeleton. It is found in the microtubule organizing center. The protein resides in the centrosome. Its subcellular location is the cell membrane. The protein localises to the membrane. Functionally, guanine nucleotide-binding proteins (G proteins) are involved as modulators or transducers in various transmembrane signaling systems. The G(i) proteins are involved in hormonal regulation of adenylate cyclase: they inhibit the cyclase in response to beta-adrenergic stimuli. May play a role in cell division. Its function is as follows. Regulates the cell surface density of dopamine receptors DRD2 by sequestrating them as an intracellular pool. In Homo sapiens (Human), this protein is Guanine nucleotide-binding protein G(i) subunit alpha-2 (GNAI2).